The chain runs to 97 residues: Aspartyl/glutamyl-tRNA(Asn/Gln) amidotransferase subunit C (97 aa).

Belongs to the GatC family. In terms of assembly, heterotrimer of A, B and C subunits.

The enzyme catalyses L-glutamyl-tRNA(Gln) + L-glutamine + ATP + H2O = L-glutaminyl-tRNA(Gln) + L-glutamate + ADP + phosphate + H(+). It catalyses the reaction L-aspartyl-tRNA(Asn) + L-glutamine + ATP + H2O = L-asparaginyl-tRNA(Asn) + L-glutamate + ADP + phosphate + 2 H(+). Functionally, allows the formation of correctly charged Asn-tRNA(Asn) or Gln-tRNA(Gln) through the transamidation of misacylated Asp-tRNA(Asn) or Glu-tRNA(Gln) in organisms which lack either or both of asparaginyl-tRNA or glutaminyl-tRNA synthetases. The reaction takes place in the presence of glutamine and ATP through an activated phospho-Asp-tRNA(Asn) or phospho-Glu-tRNA(Gln). The polypeptide is Aspartyl/glutamyl-tRNA(Asn/Gln) amidotransferase subunit C (Prochlorococcus marinus (strain MIT 9211)).